A 185-amino-acid polypeptide reads, in one-letter code: Elongation factor P (185 aa).

It belongs to the elongation factor P family.

It localises to the cytoplasm. It functions in the pathway protein biosynthesis; polypeptide chain elongation. In terms of biological role, involved in peptide bond synthesis. Stimulates efficient translation and peptide-bond synthesis on native or reconstituted 70S ribosomes in vitro. Probably functions indirectly by altering the affinity of the ribosome for aminoacyl-tRNA, thus increasing their reactivity as acceptors for peptidyl transferase. The protein is Elongation factor P of Pelotomaculum thermopropionicum (strain DSM 13744 / JCM 10971 / SI).